A 59-amino-acid chain; its full sequence is UPF0434 protein Shew_1640 (59 aa).

It belongs to the UPF0434 family.

This Shewanella loihica (strain ATCC BAA-1088 / PV-4) protein is UPF0434 protein Shew_1640.